The sequence spans 927 residues: Alpha-catenin-like protein hmp-1 (927 aa).

Coiled coils occupy residues 319-354 and 672-696; these read TRENRKQKIVAECNNLRQALQELLTEYEKSTGRRDD and QENQQNLMRRLPEEEKKKIQAQIDI. Residues 901–927 are disordered; it reads RNEIETGRDSDDEELDRRHQQRINGRL.

It belongs to the vinculin/alpha-catenin family. In terms of assembly, component of a core catenin-cadherin complex consisting of hmr-1, hmp-1 and hmp-2; the complex localizes to adherens junctions. May interact with hmp-2. In terms of tissue distribution, epidermal cells.

It localises to the cell junction. Its subcellular location is the adherens junction. The protein resides in the cytoplasm. Required for cell migration during body enclosure and cell shape changes during body elongation. Required for proper localization of other junctional components, such as pac-1. This Caenorhabditis elegans protein is Alpha-catenin-like protein hmp-1 (hmp-1).